Here is a 1375-residue protein sequence, read N- to C-terminus: DNA-directed RNA polymerase subunit beta (1375 aa).

Belongs to the RNA polymerase beta chain family. The RNAP catalytic core consists of 2 alpha, 1 beta, 1 beta' and 1 omega subunit. When a sigma factor is associated with the core the holoenzyme is formed, which can initiate transcription.

It catalyses the reaction RNA(n) + a ribonucleoside 5'-triphosphate = RNA(n+1) + diphosphate. Functionally, DNA-dependent RNA polymerase catalyzes the transcription of DNA into RNA using the four ribonucleoside triphosphates as substrates. The chain is DNA-directed RNA polymerase subunit beta from Campylobacter jejuni subsp. jejuni serotype O:6 (strain 81116 / NCTC 11828).